A 355-amino-acid polypeptide reads, in one-letter code: Heat-inducible transcription repressor HrcA (355 aa).

The protein belongs to the HrcA family.

Functionally, negative regulator of class I heat shock genes (grpE-dnaK-dnaJ and groELS operons). Prevents heat-shock induction of these operons. This is Heat-inducible transcription repressor HrcA from Nitratidesulfovibrio vulgaris (strain ATCC 29579 / DSM 644 / CCUG 34227 / NCIMB 8303 / VKM B-1760 / Hildenborough) (Desulfovibrio vulgaris).